The primary structure comprises 178 residues: MNKISKVVLVFIVILTIVILIKQSHEVKVAALFIQFENETTEPEVEAILENYDIPVNYTIDCNSNISRGKYYIKADEDKINELRKDENWTSVVELKKGNYNIIMLSAEFVPDENFLTVLEKNNLQLKKAVVCYIHFGNGSPDRVVGKNCVLEKDAIRIKNELEKNEKVLIVGLDYIQG.

It belongs to the UPF0228 family.

The polypeptide is UPF0228 protein MM_0401 (Methanosarcina mazei (strain ATCC BAA-159 / DSM 3647 / Goe1 / Go1 / JCM 11833 / OCM 88) (Methanosarcina frisia)).